Reading from the N-terminus, the 1392-residue chain is ENHANCER OF AG-4 protein 2 (1392 aa).

Positions 20 to 77 (LGDLVLAKVKGFPAWPAKISRPEDWDRAPDPKKYFVQFFGTEEIAFVAPPDIQAFTSE) constitute a PWWP domain. A compositionally biased stretch (polar residues) spans 184 to 194 (ESKVKTTSPVS). Disordered stretches follow at residues 184 to 354 (ESKV…STGT), 384 to 428 (KRQR…PAAQ), 575 to 613 (KKPQ…GERL), and 723 to 766 (QGHH…GGSL). 3 stretches are compositionally biased toward basic and acidic residues: residues 196 to 215 (SLEH…DKGT), 239 to 258 (KEAG…DKSN), and 311 to 345 (LESE…KCEI). Positions 391 to 400 (EHATSPSFSG) are enriched in polar residues. The segment covering 401 to 417 (SRDKSGKGHLEQKDRSS) has biased composition (basic and acidic residues). Polar residues-rich tracts occupy residues 591–601 (KISSSQSQPAN) and 725–744 (HHQQ…SRNQ). One can recognise a CID domain in the interval 771–912 (EAAISRDAFE…RYIDDIRASG (142 aa)). Disordered regions lie at residues 957 to 986 (FFSS…AGER), 1014 to 1356 (LEME…NYQP), and 1369 to 1392 (PGHT…WRPA). Over residues 1059–1129 (EDSPPLPQES…SPPPPPPPPS (71 aa)) the composition is skewed to pro residues. The segment covering 1157 to 1175 (LSHQTYPGSMQQDRSSIFT) has biased composition (polar residues). Positions 1215–1225 (SSREPSSFTSS) are enriched in low complexity. Polar residues-rich tracts occupy residues 1240 to 1255 (EASS…TPLS) and 1265 to 1284 (APSS…QHSY). Basic and acidic residues predominate over residues 1293–1306 (QRDDARRYRNEEPW). Residues 1311–1320 (SGHSAENQNG) show a composition bias toward polar residues.

Expressed in the inflorescence meristem, floral primordia, inflorescence stem, and floral pedicels. Also detected in the shoot apical meristem, stems, leaves, embryos, and roots.

It localises to the nucleus. Its function is as follows. Transcription factor that functions as a repressor of flowering by enhancing the expression of several genes that delay flowering including FLC, FLM/MAF1, MAF2 and SVP. Also acts in the floral homeotic AGAMOUS (AG) pathway, specifically by processing the AGAMOUS pre-mRNA. Functions in association with HUA1 and HEN4 in AG pre-mRNA processing. Involved in all three aspects of the AG functions, the specification of stamen and carpel identities, the control of floral determinacy, and the spatial restriction of AP1 expression. Acts as a transcription regulator that controls anthocyanin accumulation. The polypeptide is ENHANCER OF AG-4 protein 2 (Arabidopsis thaliana (Mouse-ear cress)).